A 1034-amino-acid polypeptide reads, in one-letter code: Presequence protease, mitochondrial (1034 aa).

The transit peptide at 1 to 26 (MLKTRLKQSRAISRVVRRYACSHPIS) directs the protein to the mitochondrion. His97 lines the Zn(2+) pocket. Catalysis depends on Glu100, which acts as the Proton acceptor. Residue His101 participates in Zn(2+) binding. Glu173 is a catalytic residue. Position 198 (Glu198) interacts with Zn(2+).

Belongs to the peptidase M16 family. PreP subfamily. Monomer and homodimer; homodimerization is induced by binding of the substrate. Zn(2+) is required as a cofactor.

It is found in the mitochondrion intermembrane space. The protein localises to the mitochondrion matrix. In terms of biological role, degrades mitochondrial transit peptides after their cleavage in the intermembrane space or in the matrix, and presequence peptides; clearance of these peptides is required to keep the presequence processing machinery running. Preferentially cleaves the N-terminal side of paired basic amino acid residues. Also degrades other unstructured peptides. May function as an ATP-dependent peptidase as opposed to a metalloendopeptidase. The protein is Presequence protease, mitochondrial (CYM1) of Candida albicans (strain SC5314 / ATCC MYA-2876) (Yeast).